Reading from the N-terminus, the 410-residue chain is Cytosolic isocitrate dehydrogenase [NADP] (410 aa).

NADP(+) contacts are provided by residues 77 to 79 (TIT) and R84. Position 79 (T79) interacts with substrate. Substrate-binding positions include 96–102 (SPNGTIR), R111, and R134. K260 lines the NADP(+) pocket. Mn(2+) contacts are provided by D275 and D279. Residues 310 to 315 (GTVTRH) and N328 contribute to the NADP(+) site.

Belongs to the isocitrate and isopropylmalate dehydrogenases family. Mg(2+) is required as a cofactor. It depends on Mn(2+) as a cofactor.

The protein localises to the cytoplasm. Its subcellular location is the cytosol. The enzyme catalyses D-threo-isocitrate + NADP(+) = 2-oxoglutarate + CO2 + NADPH. Functionally, may supply 2-oxoglutarate for amino acid biosynthesis and ammonia assimilation via the glutamine synthetase/glutamate synthase (GS/GOGAT) pathway. May be involved in the production of NADPH to promote redox signaling or homeostasis in response to oxidative stress, or redox signaling linked to defense responses. The polypeptide is Cytosolic isocitrate dehydrogenase [NADP] (Arabidopsis thaliana (Mouse-ear cress)).